The primary structure comprises 298 residues: Spermidine synthase (298 aa).

One can recognise a PABS domain in the interval 13 to 248; it reads DGWFREINNM…GSIGFVVASK (236 aa). Residue Q44 coordinates S-adenosyl 3-(methylsulfanyl)propylamine. Residue Y74 coordinates putrescine. S-adenosyl 3-(methylsulfanyl)propylamine-binding positions include Q75, D99, D119, 150 to 151, and D168; that span reads DG. The active-site Proton acceptor is D168. Putrescine is bound by residues 168–171 and Y236; that span reads DSSD.

The protein belongs to the spermidine/spermine synthase family.

The catalysed reaction is S-adenosyl 3-(methylsulfanyl)propylamine + putrescine = S-methyl-5'-thioadenosine + spermidine + H(+). The protein operates within amine and polyamine biosynthesis; spermidine biosynthesis; spermidine from putrescine: step 1/1. The protein is Spermidine synthase of Schizosaccharomyces pombe (strain 972 / ATCC 24843) (Fission yeast).